The sequence spans 125 residues: Ribosome-binding factor A (125 aa).

It belongs to the RbfA family. As to quaternary structure, monomer. Binds 30S ribosomal subunits, but not 50S ribosomal subunits or 70S ribosomes.

Its subcellular location is the cytoplasm. Functionally, one of several proteins that assist in the late maturation steps of the functional core of the 30S ribosomal subunit. Associates with free 30S ribosomal subunits (but not with 30S subunits that are part of 70S ribosomes or polysomes). Required for efficient processing of 16S rRNA. May interact with the 5'-terminal helix region of 16S rRNA. The sequence is that of Ribosome-binding factor A from Akkermansia muciniphila (strain ATCC BAA-835 / DSM 22959 / JCM 33894 / BCRC 81048 / CCUG 64013 / CIP 107961 / Muc).